A 672-amino-acid chain; its full sequence is Flap endonuclease 1 (672 aa).

The segment at 1 to 106 is N-domain; that stretch reads MGIKGLTKFI…SELEKRGEKR (106 aa). Mg(2+) is bound at residue D34. R47 and R72 together coordinate DNA. 5 residues coordinate Mg(2+): D88, E160, E162, D181, and D183. Residues 124-266 are I-domain; it reads EIKKQSGRTV…KTAYNLIKEY (143 aa). E160 is a DNA binding site. DNA contacts are provided by G244 and D246. Residue D246 coordinates Mg(2+). The segment at 349 to 357 is interaction with PCNA; it reads TQRRLDNFF. Residues 371–610 form a disordered region; that stretch reads ETKKEQTLPA…EDSPNSYNNI (240 aa). Composition is skewed to basic and acidic residues over residues 413 to 493, 502 to 526, and 535 to 548; these read MKEE…KKSL, DSDK…EKIN, and DHSR…KDNI. Positions 549-584 are enriched in low complexity; it reads SDINNNNNNNNSSSNNNNISNNHFNSVSSNSTFNSS. The span at 587–603 shows a compositional bias: basic and acidic residues; sequence LKSEDTLKSNSPLKEDS.

This sequence belongs to the XPG/RAD2 endonuclease family. FEN1 subfamily. As to quaternary structure, interacts with PCNA1 and PCNA2. Three molecules of FEN1 bind to one PCNA trimer with each molecule binding to one PCNA monomer. PCNA stimulates the nuclease activity without altering cleavage specificity. The cofactor is Mg(2+). In terms of processing, phosphorylated. Phosphorylation upon DNA damage induces relocalization to the nuclear plasma.

It localises to the nucleus. Its subcellular location is the nucleolus. It is found in the nucleoplasm. The protein localises to the mitochondrion. Functionally, structure-specific nuclease with 5'-flap endonuclease and 5'-3' exonuclease activities involved in DNA replication and repair. During DNA replication, cleaves the 5'-overhanging flap structure that is generated by displacement synthesis when DNA polymerase encounters the 5'-end of a downstream Okazaki fragment. It enters the flap from the 5'-end and then tracks to cleave the flap base, leaving a nick for ligation. Also involved in the long patch base excision repair (LP-BER) pathway, by cleaving within the apurinic/apyrimidinic (AP) site-terminated flap. Acts as a genome stabilization factor that prevents flaps from equilibrating into structures that lead to duplications and deletions. Also possesses 5'-3' exonuclease activity on nicked or gapped double-stranded DNA, and exhibits RNase H activity. Also involved in replication and repair of rDNA and in repairing mitochondrial DNA. The chain is Flap endonuclease 1 from Plasmodium falciparum (isolate 3D7).